Consider the following 2024-residue polypeptide: Pericentriolar material 1 protein (2024 aa).

The disordered stretch occupies residues Met1 to Met92. Ala2 carries the post-translational modification N-acetylalanine. A mediates interaction with DZIP1 region spans residues Ala2–Thr1460. The span at Arg43–Thr61 shows a compositional bias: basic and acidic residues. Phosphoserine is present on residues Ser65, Ser68, Ser69, Ser93, Ser110, Ser116, and Ser119. The interval Asp111–Arg163 is disordered. 2 stretches are compositionally biased toward polar residues: residues Ser116–Arg132 and Gln147–Arg163. Asn159 carries the phosphoserine; in variant Ser-159 modification. Residues Lys218–Ala301 are a coiled coil. The interval Arg354–Glu392 is disordered. Residues Glu369–Pro383 show a composition bias toward polar residues. Ser370 carries the phosphoserine modification. Ser372 is modified (phosphoserine; by PLK4). At Ser384 the chain carries Phosphoserine. N6-acetyllysine is present on Lys399. Positions Met400–His424 form a coiled coil. Disordered stretches follow at residues Arg421–Lys492 and Glu523–Ile548. Polar residues-rich tracts occupy residues Leu425–Ser445 and Gly456–Glu477. Positions Ser487–Glu543 form a coiled coil. Ser588 carries the phosphoserine modification. Disordered regions lie at residues His614–Asp652 and Phe699–Val726. The span at Gly618–Gly632 shows a compositional bias: acidic residues. The span at Ser634–Ser643 shows a compositional bias: low complexity. Position 643 is a phosphoserine (Ser643). The stretch at Glu651 to Asp682 forms a coiled coil. The span at Gln708 to Lys719 shows a compositional bias: polar residues. Coiled-coil stretches lie at residues Val726 to Ala769 and Ser824 to Glu858. At Thr859 the chain carries Phosphothreonine. Residues Ser861, Ser866, Ser869, and Ser872 each carry the phosphoserine modification. Position 877 is a phosphothreonine (Thr877). The segment at Thr915–Lys947 is disordered. Over residues Ala925–Gly946 the composition is skewed to polar residues. 4 positions are modified to phosphoserine: Ser960, Ser977, Ser988, and Ser991. Residues Thr1063–His1089 are a coiled coil. 2 disordered regions span residues Gln1085–Ser1109 and Phe1152–Trp1211. The span at His1089–Gly1099 shows a compositional bias: basic and acidic residues. Positions Phe1152–Lys1173 are enriched in polar residues. Phosphoserine occurs at positions 1185 and 1188. Residues Glu1192–Glu1201 show a composition bias toward basic and acidic residues. Ser1229 and Ser1231 each carry phosphoserine. Residues Val1232–Thr1246 are compositionally biased toward polar residues. Residues Val1232–Val1342 are disordered. A phosphoserine mark is found at Ser1257, Ser1260, Ser1262, and Ser1263. The interaction with HAP1 stretch occupies residues Thr1279–Gly1799. Basic residues predominate over residues Lys1296 to Asn1313. Ser1318 and Ser1320 each carry phosphoserine. The residue at position 1468 (Thr1468) is a Phosphothreonine. Positions Ile1515–Asn1539 form a coiled coil. Ser1573, Ser1697, Ser1730, Ser1765, Ser1768, Ser1776, and Ser1782 each carry phosphoserine. Disordered regions lie at residues Leu1725–Pro1868 and Glu1880–Val1944. Residues Ser1768–Glu1777 are compositionally biased toward acidic residues. Residues Ile1783 to Gly1797 show a composition bias toward polar residues. Acidic residues predominate over residues Gly1799–Pro1815. Positions Val1818–Glu1827 are enriched in polar residues. Residues Asp1835 to Ser1860 are compositionally biased toward basic and acidic residues. The span at Pro1905–Pro1916 shows a compositional bias: low complexity. Positions Pro1913 to Ile2024 are interaction with BBS4. Polar residues predominate over residues Ala1924 to Ala1933. Phosphoserine occurs at positions 1958 and 1977. Residues Glu2005 to Ile2024 are disordered.

It belongs to the PCM1 family. As to quaternary structure, self-associates. Interacts with C2CD3. Interacts with BBS4, BBS8, CETN3, HAP1, NDE1, NDEL1, MAP1LC3B, GABARAPAL2, and GABARAP. Interacts with CEP131; the interaction increases in response to ultraviolet light (UV) radiation. Associates with microtubule; association to microtubule is reduced in response to cellular stress, such as ultraviolet light (UV) radiation or heat shock, in a process that requires p38 MAP kinase signaling. Interacts with CFAP263. Interacts with SSX2IP. Interacts with CCDC13. Interacts with CEP290. Interacts with PARD6A. Interacts with KIAA0753/OFIP, CEP20/FOR20 and OFD1; the interaction with CEP20/FOR20 and OFD1 may be mediated by KIAA0753/OFIP. Interacts with CCDC66. Interacts with CCDC61. Interacts with DZIP1; localizes DZIP1 and the associated BBSome to centriolar satellite. Interacts with CSTPP1, TTLL1, TPGS1 and LRRC49. Interacts with CFAP53. Post-translationally, ubiquitinated. Undergoes monoubiquitination catalyzed by the E3 ubiquitin-protein ligase MIB1 in proliferating cells, preventing cilia formation. Monoubiquitination by MIB1 is inhibited in response to cellular stress, such as ultraviolet light (UV) radiation or heat shock, resulting in cilia formation initiation. Variant Ser-159 is phosphorylated. In terms of processing, phosphorylated on multiple serine and threonine residues by DYRK3 during the G2-to-M transition, after the nuclear-envelope breakdown. Phosphorylation by DYRK3 promotes disassembly of pericentriolar material. Phosphorylation at Ser-372 mediated by PLK4 is required to maintain the integrity of centriolar satellites. In terms of tissue distribution, expressed in blood, bone marrow, breast, lymph node, ovary and thyroid.

It is found in the cytoplasm. The protein localises to the cytoskeleton. The protein resides in the microtubule organizing center. Its subcellular location is the centrosome. It localises to the cytoplasmic granule. It is found in the centriolar satellite. The protein localises to the cilium basal body. Functionally, required for centrosome assembly and function. Essential for the correct localization of several centrosomal proteins including CEP250, CETN3, PCNT and NEK2. Required to anchor microtubules to the centrosome. Also involved in cilium biogenesis by recruiting the BBSome, a ciliary protein complex involved in cilium biogenesis, to the centriolar satellites. Recruits the tubulin polyglutamylase complex (TPGC) to centriolar satellites. In Homo sapiens (Human), this protein is Pericentriolar material 1 protein.